The primary structure comprises 495 residues: Aspartyl/glutamyl-tRNA(Asn/Gln) amidotransferase subunit B (495 aa).

The protein belongs to the GatB/GatE family. GatB subfamily. Heterotrimer of A, B and C subunits.

The enzyme catalyses L-glutamyl-tRNA(Gln) + L-glutamine + ATP + H2O = L-glutaminyl-tRNA(Gln) + L-glutamate + ADP + phosphate + H(+). It carries out the reaction L-aspartyl-tRNA(Asn) + L-glutamine + ATP + H2O = L-asparaginyl-tRNA(Asn) + L-glutamate + ADP + phosphate + 2 H(+). Functionally, allows the formation of correctly charged Asn-tRNA(Asn) or Gln-tRNA(Gln) through the transamidation of misacylated Asp-tRNA(Asn) or Glu-tRNA(Gln) in organisms which lack either or both of asparaginyl-tRNA or glutaminyl-tRNA synthetases. The reaction takes place in the presence of glutamine and ATP through an activated phospho-Asp-tRNA(Asn) or phospho-Glu-tRNA(Gln). This Acinetobacter baylyi (strain ATCC 33305 / BD413 / ADP1) protein is Aspartyl/glutamyl-tRNA(Asn/Gln) amidotransferase subunit B.